Reading from the N-terminus, the 341-residue chain is Phosphate acyltransferase (341 aa).

This sequence belongs to the PlsX family. As to quaternary structure, homodimer. Probably interacts with PlsY.

It is found in the cytoplasm. The enzyme catalyses a fatty acyl-[ACP] + phosphate = an acyl phosphate + holo-[ACP]. It participates in lipid metabolism; phospholipid metabolism. Its function is as follows. Catalyzes the reversible formation of acyl-phosphate (acyl-PO(4)) from acyl-[acyl-carrier-protein] (acyl-ACP). This enzyme utilizes acyl-ACP as fatty acyl donor, but not acyl-CoA. The sequence is that of Phosphate acyltransferase from Vibrio parahaemolyticus serotype O3:K6 (strain RIMD 2210633).